Here is a 282-residue protein sequence, read N- to C-terminus: Shikimate dehydrogenase (NADP(+)) (282 aa).

Residues 16–18 and Thr-63 contribute to the shikimate site; that span reads SLS. Lys-67 serves as the catalytic Proton acceptor. Positions 88 and 103 each coordinate shikimate. Residues 128-132 and Gly-243 contribute to the NADP(+) site; that span reads GAGGA.

This sequence belongs to the shikimate dehydrogenase family. As to quaternary structure, homodimer.

It catalyses the reaction shikimate + NADP(+) = 3-dehydroshikimate + NADPH + H(+). It functions in the pathway metabolic intermediate biosynthesis; chorismate biosynthesis; chorismate from D-erythrose 4-phosphate and phosphoenolpyruvate: step 4/7. In terms of biological role, involved in the biosynthesis of the chorismate, which leads to the biosynthesis of aromatic amino acids. Catalyzes the reversible NADPH linked reduction of 3-dehydroshikimate (DHSA) to yield shikimate (SA). This chain is Shikimate dehydrogenase (NADP(+)), found in Xylella fastidiosa (strain Temecula1 / ATCC 700964).